The chain runs to 1194 residues: Probable disease resistance protein RPP1 (1194 aa).

The segment at 1–27 (MGSVMSLGCSKRKATNQDVDSESRKRR) is disordered. Residues 96–260 (WKHDVFPSFH…KISTDVSNML (165 aa)) enclose the TIR domain. 105–110 (HGADVR) contributes to the NAD(+) binding site. Glu-171 is an active-site residue. Residues 280–535 (DMLEQLLRLD…ACLFNGESTT (256 aa)) enclose the NB-ARC domain. LRR repeat units follow at residues 623–647 (LSNT…HFVR), 658–681 (QLAL…GYES), 690–713 (PEFL…TKQL), 714–737 (RNLK…STAT), 739–760 (LEEL…IEKL), 761–784 (TSLQ…ENAT), 786–807 (LREL…IGTA), 808–831 (TNLK…IGDI), 832–855 (TDLE…IGNL), 866–878 (CSKL…NINL), 879–899 (KSLD…PEIS), 900–922 (THIS…IMSW), 943–965 (FDII…VKRM), and 966–991 (SRLR…SLDY). The tract at residues 1170-1194 (RRSSSPDLSPESSRVSSYDHCLRGD) is disordered. Residues 1171–1185 (RSSSPDLSPESSRVS) are compositionally biased toward low complexity.

This sequence belongs to the disease resistance TIR-NB-LRR family.

The catalysed reaction is NAD(+) + H2O = ADP-D-ribose + nicotinamide + H(+). In terms of biological role, TIR-NB-LRR receptor-like protein that confers resistance to the pathogen Hyaloperonospora arabidopsis. Probably acts as a NAD(+) hydrolase (NADase): in response to activation, catalyzes cleavage of NAD(+) into ADP-D-ribose (ADPR) and nicotinamide; NAD(+) cleavage triggering a defense system that promotes cell death. This chain is Probable disease resistance protein RPP1, found in Arabidopsis thaliana (Mouse-ear cress).